A 548-amino-acid chain; its full sequence is Membrane protein insertase YidC (548 aa).

The chain crosses the membrane as a helical span at residues 6–26 (NLLVIALLFVSFMIWQAWEQD). The interval 28–56 (NPQPQTQQTTQTTTTAAGSAADQGVPASG) is disordered. Low complexity predominate over residues 29-42 (PQPQTQQTTQTTTT). The next 4 membrane-spanning stretches (helical) occupy residues 350-370 (FVGNWGFSIIIITFIVRGIMY), 424-444 (FPLIIQMPIFLALYYMLMGSI), 458-478 (LSAQDPYYILPILMGVTMFFI), and 499-519 (PVIFTVFFLWFPSGLVLYYIV).

The protein belongs to the OXA1/ALB3/YidC family. Type 1 subfamily. As to quaternary structure, interacts with the Sec translocase complex via SecD. Specifically interacts with transmembrane segments of nascent integral membrane proteins during membrane integration.

The protein localises to the cell inner membrane. In terms of biological role, required for the insertion and/or proper folding and/or complex formation of integral membrane proteins into the membrane. Involved in integration of membrane proteins that insert both dependently and independently of the Sec translocase complex, as well as at least some lipoproteins. Aids folding of multispanning membrane proteins. The chain is Membrane protein insertase YidC from Salmonella typhimurium (strain LT2 / SGSC1412 / ATCC 700720).